A 58-amino-acid polypeptide reads, in one-letter code: Keratin-associated protein 19-9b (58 aa).

The tract at residues 6-52 (GNYYGGLGYGLGGFGGFGGLGYGYGSSYGLGGYGGYGYFSPSFYGGY) is 12 X 2 AA repeats of G-[YCGS].

The protein belongs to the KRTAP type 19 family. Interacts with hair keratins.

Its function is as follows. In the hair cortex, hair keratin intermediate filaments are embedded in an interfilamentous matrix, consisting of hair keratin-associated proteins (KRTAP), which are essential for the formation of a rigid and resistant hair shaft through their extensive disulfide bond cross-linking with abundant cysteine residues of hair keratins. The matrix proteins include the high-sulfur and high-glycine-tyrosine keratins. This Mus musculus (Mouse) protein is Keratin-associated protein 19-9b (Krtap19-9b).